The primary structure comprises 148 residues: Macrodomain Ter protein (148 aa).

Belongs to the MatP family. In terms of assembly, homodimer.

It localises to the cytoplasm. Its function is as follows. Required for spatial organization of the terminus region of the chromosome (Ter macrodomain) during the cell cycle. Prevents early segregation of duplicated Ter macrodomains during cell division. Binds specifically to matS, which is a 13 bp signature motif repeated within the Ter macrodomain. The polypeptide is Macrodomain Ter protein (Aliivibrio salmonicida (strain LFI1238) (Vibrio salmonicida (strain LFI1238))).